The chain runs to 122 residues: Small ribosomal subunit protein uS13 (122 aa).

Residues 99 to 122 (RGQRTHTNARTRKGPAKAIAGKKK) form a disordered region.

It belongs to the universal ribosomal protein uS13 family. Part of the 30S ribosomal subunit. Forms a loose heterodimer with protein S19. Forms two bridges to the 50S subunit in the 70S ribosome.

Located at the top of the head of the 30S subunit, it contacts several helices of the 16S rRNA. In the 70S ribosome it contacts the 23S rRNA (bridge B1a) and protein L5 of the 50S subunit (bridge B1b), connecting the 2 subunits; these bridges are implicated in subunit movement. Contacts the tRNAs in the A and P-sites. The protein is Small ribosomal subunit protein uS13 of Allorhizobium ampelinum (strain ATCC BAA-846 / DSM 112012 / S4) (Agrobacterium vitis (strain S4)).